A 178-amino-acid polypeptide reads, in one-letter code: Small ribosomal subunit protein uS4 (178 aa).

One can recognise an S4 RNA-binding domain in the interval 104–166; that stretch reads RRLQTIVYRK…PNSPMASENH (63 aa). A disordered region spans residues 158-178; that stretch reads NSPMASENHPERTAAVSEENQ.

It belongs to the universal ribosomal protein uS4 family. In terms of assembly, part of the 30S ribosomal subunit. Contacts protein S5. The interaction surface between S4 and S5 is involved in control of translational fidelity.

In terms of biological role, one of the primary rRNA binding proteins, it binds directly to 16S rRNA where it nucleates assembly of the body of the 30S subunit. With S5 and S12 plays an important role in translational accuracy. This is Small ribosomal subunit protein uS4 from Methanococcus maripaludis (strain C5 / ATCC BAA-1333).